Reading from the N-terminus, the 479-residue chain is Arf-GAP domain and FG repeat-containing protein 2 (479 aa).

In terms of domain architecture, Arf-GAP spans 27 to 153 (EVWCRRVREL…WYVPPEQVKG (127 aa)). Residues 47–70 (CFECAQRGVTYVDITVGSFVCTTC) form a C4-type zinc finger. Disordered regions lie at residues 150 to 223 (QVKG…TKKA) and 450 to 479 (LSQPAGISTNPFMTGSSAFASKPPTTNPFL). Over residues 157-167 (SKGSVSATPVQ) the composition is skewed to polar residues. Lys-174 carries the post-translational modification N6-acetyllysine. Positions 194–218 (SSQPGSQSQARSSSQARSSQPPSHS) are enriched in low complexity. Polar residues predominate over residues 454 to 479 (AGISTNPFMTGSSAFASKPPTTNPFL).

As to quaternary structure, interacts with EPS15R.

The polypeptide is Arf-GAP domain and FG repeat-containing protein 2 (Agfg2) (Mus musculus (Mouse)).